The chain runs to 115 residues: uncharacterized protein (115 aa).

A run of 3 helical transmembrane segments spans residues 1 to 21, 33 to 53, and 54 to 74; these read MFLA…FGSW, ALAL…LAAG, and GVVA…VCIA.

The protein to M.leprae ML0030.

Its subcellular location is the cell membrane. This is an uncharacterized protein from Mycobacterium tuberculosis (strain CDC 1551 / Oshkosh).